The following is a 229-amino-acid chain: Adenylate kinase 1 (229 aa).

Gly-42–Thr-47 contributes to the ATP binding site. The residue at position 62 (Ser-62) is a Phosphoserine. AMP is bound by residues Ser-63, Arg-68, Gly-118–Arg-121, and Gln-125. Arg-156 lines the ATP pocket. AMP-binding residues include Arg-164 and Arg-175.

The protein belongs to the adenylate kinase family. AK1 subfamily. High expression levels in the thorax, suggesting a possible function in the gastrointestinal or reproductive systems.

The protein localises to the cytoplasm. It catalyses the reaction AMP + ATP = 2 ADP. Catalyzes the reversible transfer of the terminal phosphate group between ATP and AMP. Plays an important role in cellular energy homeostasis and in adenine nucleotide metabolism. This chain is Adenylate kinase 1, found in Drosophila melanogaster (Fruit fly).